The sequence spans 1342 residues: DNA-directed RNA polymerase subunit beta (1342 aa).

The protein belongs to the RNA polymerase beta chain family. In terms of assembly, the RNAP catalytic core consists of 2 alpha, 1 beta, 1 beta' and 1 omega subunit. When a sigma factor is associated with the core the holoenzyme is formed, which can initiate transcription.

It catalyses the reaction RNA(n) + a ribonucleoside 5'-triphosphate = RNA(n+1) + diphosphate. In terms of biological role, DNA-dependent RNA polymerase catalyzes the transcription of DNA into RNA using the four ribonucleoside triphosphates as substrates. In Aliivibrio fischeri (strain ATCC 700601 / ES114) (Vibrio fischeri), this protein is DNA-directed RNA polymerase subunit beta.